The sequence spans 833 residues: Bifunctional dethiobiotin synthetase/7,8-diamino-pelargonic acid aminotransferase, mitochondrial (833 aa).

Residues 1–23 (MIPVTATLIRHRLRHLRHRIRFK) constitute a mitochondrion transit peptide. Residues 36–299 (HPTYLIWSAN…VLVLPPVPKD (264 aa)) are dethiobiotin synthetase. Residue 47–52 (SLGKTL) participates in ATP binding. Position 51 (T51) interacts with Mg(2+). Residue T81 participates in substrate binding. D88 lines the Mg(2+) pocket. ATP-binding positions include D97, 210–213 (ETAG), and 270–271 (ED). A Mg(2+)-binding site is contributed by E210. The interval 332–830 (RLNGMAKLAG…TKLYKRLGEF (499 aa)) is 7,8-diamino-pelargonic acid aminotransferase. 391-392 (WW) is a (8S)-8-amino-7-oxononanoate binding site. 453 to 454 (GS) provides a ligand contact to pyridoxal 5'-phosphate. Y495 contributes to the (8S)-8-amino-7-oxononanoate binding site. Residues 518–520 (PWY) and E545 contribute to the ATP site. Position 637 (D637) interacts with pyridoxal 5'-phosphate. (8S)-8-amino-7-oxononanoate-binding residues include K666 and G700. K666 bears the N6-(pyridoxal phosphate)lysine mark. 701–702 (HS) serves as a coordination point for pyridoxal 5'-phosphate. R797 is a binding site for (8S)-8-amino-7-oxononanoate.

It in the N-terminal section; belongs to the dethiobiotin synthetase family. This sequence in the C-terminal section; belongs to the class-III pyridoxal-phosphate-dependent aminotransferase family. BioA subfamily. Homodimer. The cofactor is Mg(2+). Requires pyridoxal 5'-phosphate as cofactor.

It localises to the mitochondrion matrix. The catalysed reaction is (7R,8S)-7,8-diammoniononanoate + CO2 + ATP = (4R,5S)-dethiobiotin + ADP + phosphate + 3 H(+). It carries out the reaction (8S)-8-amino-7-oxononanoate + S-adenosyl-L-methionine = S-adenosyl-4-methylsulfanyl-2-oxobutanoate + (7R,8S)-7,8-diammoniononanoate. Its pathway is cofactor biosynthesis; biotin biosynthesis; biotin from 7,8-diaminononanoate: step 1/2. It functions in the pathway cofactor biosynthesis; biotin biosynthesis; 7,8-diaminononanoate from 8-amino-7-oxononanoate (SAM route): step 1/1. In terms of biological role, bifunctional enzyme that catalyzes two different reactions involved in the biotin biosynthesis. Functionally, catalyzes a mechanistically unusual reaction, the ATP-dependent insertion of CO2 between the N7 and N8 nitrogen atoms of 7,8-diaminopelargonic acid (DAPA) to form an ureido ring. Its function is as follows. Catalyzes the transfer of the alpha-amino group from S-adenosyl-L-methionine (SAM) to 7-keto-8-aminopelargonic acid (KAPA) to form 7,8-diaminopelargonic acid (DAPA). It is the only aminotransferase known to utilize SAM as an amino donor. The protein is Bifunctional dethiobiotin synthetase/7,8-diamino-pelargonic acid aminotransferase, mitochondrial of Arabidopsis thaliana (Mouse-ear cress).